The chain runs to 384 residues: Sensor-like histidine kinase SenX3 (384 aa).

Positions 153–369 (NVSHELKTPV…TFTLSIPEYP (217 aa)) constitute a Histidine kinase domain. A Phosphohistidine; by autocatalysis modification is found at histidine 156. The tract at residues 360–384 (TFTLSIPEYPDPESHSDEREDQRER) is disordered. Basic and acidic residues predominate over residues 371–384 (PESHSDEREDQRER).

In terms of processing, autophosphorylated.

The protein localises to the cell membrane. It catalyses the reaction ATP + protein L-histidine = ADP + protein N-phospho-L-histidine.. Functionally, member of the two-component regulatory system SenX3/RegX3 involved in stress response. The system is involved in phosphate starvation response. Probably exhibits a dual role as a phosphatase or a phosphodonor for the response regulator RegX3, depending upon phosphate availability. When environmental phosphate is abundant, SenX3 is required to maintain RegX3 in an unphosphorylated state, where it is unable to bind target DNA. Under conditions of phosphate limitation, SenX3 autophosphorylates and then transfers the phosphate group to RegX3. Probably does not itself sense phosphate concentrations, which may be relayed to SenX3 by the PstSCAB phosphate transporter system. In Mycolicibacterium smegmatis (strain ATCC 700084 / mc(2)155) (Mycobacterium smegmatis), this protein is Sensor-like histidine kinase SenX3.